A 312-amino-acid polypeptide reads, in one-letter code: Ribosomal protein L11 methyltransferase (312 aa).

S-adenosyl-L-methionine contacts are provided by threonine 160, glycine 181, aspartate 203, and asparagine 248.

It belongs to the methyltransferase superfamily. PrmA family.

Its subcellular location is the cytoplasm. It catalyses the reaction L-lysyl-[protein] + 3 S-adenosyl-L-methionine = N(6),N(6),N(6)-trimethyl-L-lysyl-[protein] + 3 S-adenosyl-L-homocysteine + 3 H(+). Functionally, methylates ribosomal protein L11. This is Ribosomal protein L11 methyltransferase from Fusobacterium nucleatum subsp. nucleatum (strain ATCC 25586 / DSM 15643 / BCRC 10681 / CIP 101130 / JCM 8532 / KCTC 2640 / LMG 13131 / VPI 4355).